The primary structure comprises 130 residues: Small ribosomal subunit protein eS17 (130 aa).

Residues 74 to 84 are compositionally biased toward basic and acidic residues; it reads QEEERERRDNY. Residues 74 to 97 form a disordered region; it reads QEEERERRDNYMPEISTVDPSQLT.

The protein belongs to the eukaryotic ribosomal protein eS17 family.

This chain is Small ribosomal subunit protein eS17 (rps-17), found in Caenorhabditis elegans.